The sequence spans 890 residues: Leucine-rich repeat receptor-like tyrosine-protein kinase PXC3 (890 aa).

An N-terminal signal peptide occupies residues M1–A23. The Extracellular segment spans residues Q24–R534. Residues N46, N61, N78, and N108 are each glycosylated (N-linked (GlcNAc...) asparagine). 18 LRR repeats span residues M67–L85, R86–N108, S110–K132, L133–L157, R159–L181, S182–V205, S206–K229, K231–S254, L256–N276, S278–K300, C301–L325, I326–S349, G350–M373, R375–C397, K399–M421, R422–L446, D447–G469, and M471–P492. Residues N140, N171, and N180 are each glycosylated (N-linked (GlcNAc...) asparagine). 3 N-linked (GlcNAc...) asparagine glycosylation sites follow: N276, N289, and N303. N-linked (GlcNAc...) asparagine glycosylation occurs at N363. N-linked (GlcNAc...) asparagine glycosylation occurs at N429. N-linked (GlcNAc...) asparagine glycosylation is found at N477 and N498. A helical transmembrane segment spans residues I535–L555. The Cytoplasmic portion of the chain corresponds to L556 to K890. In terms of domain architecture, Protein kinase spans M608–V886. ATP-binding positions include L614–V622 and K636. D735 serves as the catalytic Proton acceptor.

It belongs to the protein kinase superfamily. Tyr protein kinase family. In terms of tissue distribution, expressed in the vascular strands of cotyledons, the shoot apex, hypocotyls, roots, leaves, stems and flowers.

Its subcellular location is the cell membrane. It catalyses the reaction L-tyrosyl-[protein] + ATP = O-phospho-L-tyrosyl-[protein] + ADP + H(+). Leucine-rich repeat receptor-like protein kinase that may play a role in vascular tissues development. This Arabidopsis thaliana (Mouse-ear cress) protein is Leucine-rich repeat receptor-like tyrosine-protein kinase PXC3.